Reading from the N-terminus, the 361-residue chain is S-adenosylmethionine:tRNA ribosyltransferase-isomerase (361 aa).

It belongs to the QueA family. As to quaternary structure, monomer.

It is found in the cytoplasm. The catalysed reaction is 7-aminomethyl-7-carbaguanosine(34) in tRNA + S-adenosyl-L-methionine = epoxyqueuosine(34) in tRNA + adenine + L-methionine + 2 H(+). The protein operates within tRNA modification; tRNA-queuosine biosynthesis. Functionally, transfers and isomerizes the ribose moiety from AdoMet to the 7-aminomethyl group of 7-deazaguanine (preQ1-tRNA) to give epoxyqueuosine (oQ-tRNA). This is S-adenosylmethionine:tRNA ribosyltransferase-isomerase from Glaesserella parasuis serovar 5 (strain SH0165) (Haemophilus parasuis).